A 136-amino-acid polypeptide reads, in one-letter code: Small ribosomal subunit protein uS19 (136 aa).

This sequence belongs to the universal ribosomal protein uS19 family.

In terms of biological role, protein S19 forms a complex with S13 that binds strongly to the 16S ribosomal RNA. This Methanosphaera stadtmanae (strain ATCC 43021 / DSM 3091 / JCM 11832 / MCB-3) protein is Small ribosomal subunit protein uS19.